The primary structure comprises 319 residues: Beta-ketoacyl-[acyl-carrier-protein] synthase III (319 aa).

Residues C115 and H246 contribute to the active site. Residues 247 to 251 (QANLR) are ACP-binding. N276 is an active-site residue.

This sequence belongs to the thiolase-like superfamily. FabH family. Homodimer.

The protein resides in the cytoplasm. It catalyses the reaction malonyl-[ACP] + acetyl-CoA + H(+) = 3-oxobutanoyl-[ACP] + CO2 + CoA. The protein operates within lipid metabolism; fatty acid biosynthesis. Its function is as follows. Catalyzes the condensation reaction of fatty acid synthesis by the addition to an acyl acceptor of two carbons from malonyl-ACP. Catalyzes the first condensation reaction which initiates fatty acid synthesis and may therefore play a role in governing the total rate of fatty acid production. Possesses both acetoacetyl-ACP synthase and acetyl transacylase activities. Its substrate specificity determines the biosynthesis of branched-chain and/or straight-chain of fatty acids. This is Beta-ketoacyl-[acyl-carrier-protein] synthase III from Coxiella burnetii (strain RSA 331 / Henzerling II).